A 293-amino-acid polypeptide reads, in one-letter code: 3-methyl-2-oxobutanoate hydroxymethyltransferase (293 aa).

A disordered region spans residues 1–25; it reads MTDSPTAGTPYGTLPPASPLPQRRP. Positions 67 and 110 each coordinate Mg(2+). 3-methyl-2-oxobutanoate is bound by residues 67–68, D110, and K139; that span reads DS. Residue E141 coordinates Mg(2+). Catalysis depends on E208, which acts as the Proton acceptor.

It belongs to the PanB family. As to quaternary structure, homodecamer; pentamer of dimers. The cofactor is Mg(2+).

The protein resides in the cytoplasm. The catalysed reaction is 3-methyl-2-oxobutanoate + (6R)-5,10-methylene-5,6,7,8-tetrahydrofolate + H2O = 2-dehydropantoate + (6S)-5,6,7,8-tetrahydrofolate. The protein operates within cofactor biosynthesis; (R)-pantothenate biosynthesis; (R)-pantoate from 3-methyl-2-oxobutanoate: step 1/2. Functionally, catalyzes the reversible reaction in which hydroxymethyl group from 5,10-methylenetetrahydrofolate is transferred onto alpha-ketoisovalerate to form ketopantoate. In Acidovorax sp. (strain JS42), this protein is 3-methyl-2-oxobutanoate hydroxymethyltransferase.